Consider the following 159-residue polypeptide: Protein Smg homolog (159 aa).

Belongs to the Smg family.

This is Protein Smg homolog from Vibrio parahaemolyticus serotype O3:K6 (strain RIMD 2210633).